The following is a 749-amino-acid chain: Protein SEY1 homolog 2 (749 aa).

Residues 1-671 are Cytoplasmic-facing; it reads MIKNYGDRYH…QKHKQDFLQN (671 aa). Residues 40–265 enclose the GB1/RHD3-type G domain; sequence GKNYNIVSII…YEKNVRWSDM (226 aa). 50 to 57 lines the GTP pocket; it reads GSQSTGKS. A coiled-coil region spans residues 445 to 465; sequence NQLKAFVEAQLATFKQQLDNI. The helical transmembrane segment at 672 to 692 threads the bilayer; that stretch reads IPKPFWFLLLFFMYDDVLRWM. Residues 693 to 695 are Lumenal-facing; sequence GNP. Residues 696 to 716 form a helical membrane-spanning segment; it reads LFLYPILIILCFVGFCIAIGL. At 717 to 749 the chain is on the cytoplasmic side; it reads HSLPKLAFQWVFRTLNQAVIPIIFGGISKLKGS.

This sequence belongs to the TRAFAC class dynamin-like GTPase superfamily. GB1/RHD3 GTPase family. RHD3 subfamily.

The protein resides in the endoplasmic reticulum membrane. In terms of biological role, probable GTP-binding protein that may be involved in cell development. The sequence is that of Protein SEY1 homolog 2 from Paramecium tetraurelia.